A 270-amino-acid chain; its full sequence is Bacterial microcompartment shell protein PduB (270 aa).

BMC circularly permuted domains follow at residues 47–152 (EFVG…DRTF) and 154–262 (DVYA…GSEP).

It belongs to the EutL/PduB family. Homotrimerizes to form a pseudohexamer with a central pore. The trimers pack into an array. Both forms interact with shell protein PduA. In terms of processing, in purified BMCs seen as a 30.0 kDa and 25.0 kDa form; the smaller form is called PduB'.

Its subcellular location is the bacterial microcompartment. The protein operates within polyol metabolism; 1,2-propanediol degradation. In terms of biological role, the two proteins produced are among the major shell proteins of the bacterial microcompartment (BMC) shell dedicated to 1,2-propanediol (1,2-PD) degradation. Overexpression of the gene gives large amorphous intracellular structures; when only PduB is overexpressed large circular bodies are observed which contain concentric rings, whereas with PduB' overexpression internal bodies with regular straight-lined structures were generated. The N-terminus of the long form (PduB) is required for correct formation of BMCs. May play a major role in binding the enzyme contents to the shell. Expression of a cosmid containing the full 21-gene pdu operon in E.coli allows E.coli to grow on 1,2-propanediol (1,2-PD) with the appearance of BMCs in its cytoplasm. Functionally, the 1,2-PD-specific bacterial microcompartment (BMC) concentrates low levels of 1,2-PD catabolic enzymes, concentrates volatile reaction intermediates thus enhancing pathway flux and keeps the level of toxic, mutagenic propionaldehyde low. The polypeptide is Bacterial microcompartment shell protein PduB (Citrobacter freundii).